The chain runs to 527 residues: Cytokinin dehydrogenase 6 (527 aa).

The signal sequence occupies residues 1 to 22 (MAARCSIAFMVMASCLSVVVSG). One can recognise an FAD-binding PCMH-type domain in the interval 55–236 (VAAAPEAVLH…TRARIGLEPA (182 aa)). FAD-binding residues include glycine 91 and glycine 93. Histidine 94 carries the pros-8alpha-FAD histidine modification. Residues serine 95 and glutamine 99 each contribute to the FAD site. Asparagine 121 carries N-linked (GlcNAc...) asparagine glycosylation. Aspartate 160, threonine 165, serine 171, isoleucine 175, and isoleucine 226 together coordinate FAD. N-linked (GlcNAc...) asparagine glycans are attached at residues asparagine 280 and asparagine 323. Tyrosine 475, serine 510, and glutamine 513 together coordinate FAD.

The protein belongs to the oxygen-dependent FAD-linked oxidoreductase family. In terms of assembly, monomer. FAD serves as cofactor.

The protein localises to the secreted. It is found in the extracellular space. The enzyme catalyses N(6)-dimethylallyladenine + A + H2O = 3-methyl-2-butenal + adenine + AH2. In terms of biological role, catalyzes the oxidation of cytokinins, a family of N(6)-substituted adenine derivatives that are plant hormones, where the substituent is an isopentenyl group. The polypeptide is Cytokinin dehydrogenase 6 (CKX6) (Oryza sativa subsp. japonica (Rice)).